The primary structure comprises 509 residues: MTAATEQKEKTGTDNVGRVVRVTGPVVDVEFPRGSVPELFNALHAEISYKDLAKTLTLEVAQHLGDSLVRCISMQPTDGLVRGVDVTDTGASISVPVGEGVKGHVFNALGACLDDPGYGKDFEKWSIHRKPPAFDELEPRTEMLETGLKVVDLLTPYVRGGKIALFGGAGVGKTVLIQEMINRIARNFGGTSVFAGVGERTREGNDLWVELADANVLKDTALVFGQMDEPPGTRMRVALSALTMAEYFRDEKQQDVLLFIDNIFRFTQAGSEVSTLLGRMPSAVGYQPTLADEMGELQERITSTRGRSITSMQAVYVPADDYTDPAPATTFAHLDATTELSRSVFSKGIFPAVDPLASSSTILDPSVVGDEHYRVAQEVIRILQRYKDLQDIIAILGIDELAEEDKQLVQRARRIERFLSQNMMAAEQFTGQPGSTVPLKETIEAFDKLSKGDFDHLPEQAFFLIGGLEDLQRKAESLGAKMEDTSGDGAPAQSDSKSDSKGDDADKDA.

167–174 serves as a coordination point for ATP; sequence GGAGVGKT. Residues 476 to 509 form a disordered region; sequence ESLGAKMEDTSGDGAPAQSDSKSDSKGDDADKDA. Residues 496–509 are compositionally biased toward basic and acidic residues; that stretch reads SKSDSKGDDADKDA.

Belongs to the ATPase alpha/beta chains family. As to quaternary structure, F-type ATPases have 2 components, CF(1) - the catalytic core - and CF(0) - the membrane proton channel. CF(1) has five subunits: alpha(3), beta(3), gamma(1), delta(1), epsilon(1). CF(0) has three main subunits: a(1), b(2) and c(9-12). The alpha and beta chains form an alternating ring which encloses part of the gamma chain. CF(1) is attached to CF(0) by a central stalk formed by the gamma and epsilon chains, while a peripheral stalk is formed by the delta and b chains.

The protein resides in the cell membrane. The catalysed reaction is ATP + H2O + 4 H(+)(in) = ADP + phosphate + 5 H(+)(out). Its function is as follows. Produces ATP from ADP in the presence of a proton gradient across the membrane. The catalytic sites are hosted primarily by the beta subunits. In Mycobacterium sp. (strain KMS), this protein is ATP synthase subunit beta.